We begin with the raw amino-acid sequence, 399 residues long: MFLTRRLLGPFTSAIARKLEHYSQFQPSSLTIQQYLDFGQTGTMKSSFLFLKNELLVRLANIMQEISLLPPTLLKMPSRRLVSNWYCESFEDLLQFEHAQVEPDIMSKFNDQLQTILKRHSRVVETMAEGLIELRESEGVDIASERGIQYFLDRFYINRISIRMLQNQHLVVFGVVLPESPRHIGCIDPGCDVESVVHDAYENARFLCERYYLTAPGMKLEMHNSVNPGMPISIVAVPSHLYHIMFELFKNSMRATVENHGADEDLPPIKVMVVRGAEDLSIKISDRGGGVSRTILDRLFTYMYSTAPPPPRDGTQPPLAGYGYGLPLSRLYARYFHGDMYLVSMEGYGTDAMIFLKAIPVEASEVLPIYSTSSRRQLTMSPQAADWSHQLPNHGNRNL.

A mitochondrion-targeting transit peptide spans 1–18 (MFLTRRLLGPFTSAIARK). The Histidine kinase domain occupies 123 to 360 (VVETMAEGLI…DAMIFLKAIP (238 aa)). Residues 247 to 254 (ELFKNSMR), Asp286, 305 to 306 (ST), and 321 to 326 (GYGYGL) each bind ATP.

This sequence belongs to the PDK/BCKDK protein kinase family.

It localises to the mitochondrion matrix. It carries out the reaction L-seryl-[pyruvate dehydrogenase E1 alpha subunit] + ATP = O-phospho-L-seryl-[pyruvate dehydrogenase E1 alpha subunit] + ADP + H(+). Functionally, inhibits the mitochondrial pyruvate dehydrogenase complex by phosphorylation of the E1 alpha subunit, thus contributing to the regulation of glucose metabolism. The sequence is that of [Pyruvate dehydrogenase (acetyl-transferring)] kinase, mitochondrial from Ascaris suum (Pig roundworm).